A 193-amino-acid polypeptide reads, in one-letter code: T-cell receptor-associated transmembrane adapter 1 (193 aa).

The Extracellular portion of the chain corresponds to 1–10 (MSGNAECHFS). A helical; Signal-anchor for type III membrane protein transmembrane segment spans residues 11–31 (IWAILAFLGLALTISLIFNIF). Residues 32 to 193 (HCVEKQRQEK…LHSLDYDLAQ (162 aa)) lie on the Cytoplasmic side of the membrane. Phosphoserine is present on Ser46. Position 80 is a phosphotyrosine (Tyr80). Residues 80-83 (YEQM) are interaction with PIK3R1. The interval 116–166 (NEGKRRKPRKQKSHLSDKDEEGQMHAKDISLSKTTLVDSYPPESEAIEENI) is disordered. Residues 119–128 (KRRKPRKQKS) are compositionally biased toward basic residues. The span at 129–145 (HLSDKDEEGQMHAKDIS) shows a compositional bias: basic and acidic residues.

As to quaternary structure, homodimer; disulfide-linked. Interacts with CD3Z. When phosphorylated, interacts with PIK3R1. In terms of processing, phosphorylated on tyrosines upon TCR activation.

Its subcellular location is the cell membrane. Functionally, stabilizes the TCR (T-cell antigen receptor)/CD3 complex at the surface of T-cells. This chain is T-cell receptor-associated transmembrane adapter 1 (TRAT1), found in Bos taurus (Bovine).